Consider the following 1239-residue polypeptide: Inner tegument protein (1239 aa).

Residues 1–10 are compositionally biased toward low complexity; it reads MASAMESDSS. 3 disordered regions span residues 1-20, 672-708, and 1090-1239; these read MASA…DAQP, GESP…GGPW, and GRNA…AEDE. The tract at residues 618 to 1239 is interaction with large tegument protein; the sequence is NELPKTRSLA…RPPRPTAEDE (622 aa). Positions 1115–1126 are enriched in low complexity; sequence DSSPFSFSSSDF. Residues 1127–1136 show a composition bias toward acidic residues; that stretch reads SDQDEGEGGE. A compositionally biased stretch (low complexity) spans 1181 to 1190; the sequence is RTTPSPSRRA. Over residues 1219–1232 the composition is skewed to basic residues; sequence VRPRTRRGATRRPP.

The protein belongs to the herpesviridae inner tegument protein family. In terms of assembly, interacts (via C-terminus) with the large tegument protein/LTP (via N-terminus).

The protein resides in the virion tegument. It localises to the host cytoplasm. It is found in the host nucleus. The protein localises to the host Golgi apparatus. Its subcellular location is the host trans-Golgi network. Plays an essential role in cytoplasmic secondary envelopment during viral egress. Interacts with the capsid via the large tegument protein/LTP and participates in its transport to the host trans-Golgi network (TGN) where secondary envelopment occurs. Modulates tegumentation and capsid accumulation at the viral assembly complex. The polypeptide is Inner tegument protein (Homo sapiens (Human)).